A 425-amino-acid chain; its full sequence is Glutamate-1-semialdehyde 2,1-aminomutase (425 aa).

N6-(pyridoxal phosphate)lysine is present on lysine 265.

Belongs to the class-III pyridoxal-phosphate-dependent aminotransferase family. HemL subfamily. Homodimer. Pyridoxal 5'-phosphate is required as a cofactor.

Its subcellular location is the cytoplasm. The catalysed reaction is (S)-4-amino-5-oxopentanoate = 5-aminolevulinate. It participates in porphyrin-containing compound metabolism; protoporphyrin-IX biosynthesis; 5-aminolevulinate from L-glutamyl-tRNA(Glu): step 2/2. The protein is Glutamate-1-semialdehyde 2,1-aminomutase of Clostridium perfringens (strain 13 / Type A).